The following is a 121-amino-acid chain: Small ribosomal subunit protein uS13 (121 aa).

Positions 97–121 (VRGQRTRTNARTRRGARKTVAGKKK) are disordered. Residues 100–121 (QRTRTNARTRRGARKTVAGKKK) show a composition bias toward basic residues.

The protein belongs to the universal ribosomal protein uS13 family. As to quaternary structure, part of the 30S ribosomal subunit. Forms a loose heterodimer with protein S19. Forms two bridges to the 50S subunit in the 70S ribosome.

Located at the top of the head of the 30S subunit, it contacts several helices of the 16S rRNA. In the 70S ribosome it contacts the 23S rRNA (bridge B1a) and protein L5 of the 50S subunit (bridge B1b), connecting the 2 subunits; these bridges are implicated in subunit movement. Contacts the tRNAs in the A and P-sites. This is Small ribosomal subunit protein uS13 from Parasynechococcus marenigrum (strain WH8102).